The primary structure comprises 930 residues: Translation initiation factor IF-2 (930 aa).

The segment covering 50 to 67 (FKPAAAPKVEAKPAAPKV) has biased composition (low complexity). Disordered stretches follow at residues 50-195 (FKPA…PRID) and 260-346 (EVVP…HELP). 2 stretches are compositionally biased toward basic and acidic residues: residues 68–90 (SAEKKTEKSEPAKPAVAKEEAKP) and 110–125 (FKAEREARAKEQAERR). Low complexity predominate over residues 129-141 (KGNNRDQQQNGNR). 2 stretches are compositionally biased toward basic and acidic residues: residues 157–167 (RDNRRFNDQAK) and 262–295 (VPEKKEPAVDTRRKKQARPDKNRDDYDHEEDGPR). Over residues 309–318 (NQKNSNWNNN) the composition is skewed to low complexity. Residues 337–346 (VTERKFHELP) show a composition bias toward basic and acidic residues. Positions 432–599 (ERPPVVTIMG…TVLLVAEIQE (168 aa)) constitute a tr-type G domain. A G1 region spans residues 441-448 (GHVDHGKT). Residue 441-448 (GHVDHGKT) coordinates GTP. A G2 region spans residues 466-470 (GITQH). The segment at 487–490 (DTPG) is G3. GTP is bound by residues 487–491 (DTPGH) and 541–544 (NKID). A G4 region spans residues 541 to 544 (NKID). Residues 577 to 579 (SAK) are G5.

This sequence belongs to the TRAFAC class translation factor GTPase superfamily. Classic translation factor GTPase family. IF-2 subfamily.

Its subcellular location is the cytoplasm. One of the essential components for the initiation of protein synthesis. Protects formylmethionyl-tRNA from spontaneous hydrolysis and promotes its binding to the 30S ribosomal subunits. Also involved in the hydrolysis of GTP during the formation of the 70S ribosomal complex. This chain is Translation initiation factor IF-2, found in Streptococcus pneumoniae (strain Hungary19A-6).